We begin with the raw amino-acid sequence, 465 residues long: tRNA (guanine(37)-N(1))-methyltransferase (465 aa).

S-adenosyl-L-methionine-binding positions include His-189, 227–228, and 255–256; these read DL and DA. Residues 283 to 362 are disordered; it reads YPKEGVPANE…GPGPPPSKPW (80 aa). A compositionally biased stretch (polar residues) spans 291–320; sequence NENSSSNGNHNDVREGSQNGANESSVASTT. Over residues 343 to 352 the composition is skewed to basic residues; the sequence is TKRRNNKRVR. Asn-371 is an S-adenosyl-L-methionine binding site.

It belongs to the class I-like SAM-binding methyltransferase superfamily. TRM5/TYW2 family. As to quaternary structure, monomer.

The protein resides in the mitochondrion matrix. It is found in the nucleus. It localises to the cytoplasm. It catalyses the reaction guanosine(37) in tRNA + S-adenosyl-L-methionine = N(1)-methylguanosine(37) in tRNA + S-adenosyl-L-homocysteine + H(+). In terms of biological role, specifically methylates the N1 position of guanosine-37 in various cytoplasmic and mitochondrial tRNAs. Methylation is not dependent on the nature of the nucleoside 5' of the target nucleoside. This is the first step in the biosynthesis of wybutosine (yW), a modified base adjacent to the anticodon of tRNAs and required for accurate decoding. The chain is tRNA (guanine(37)-N(1))-methyltransferase from Sorghum bicolor (Sorghum).